The chain runs to 465 residues: uncharacterized protein (465 aa).

In terms of domain architecture, RAMA spans 6–91; the sequence is NVTLSNLIDF…LKLKREYLFR (86 aa). Disordered regions lie at residues 95–377 and 392–465; these read TGKN…SNNQ and YNQQ…KSKS. Residues 117 to 137 are compositionally biased toward low complexity; the sequence is PQQQQQQQQQQQQQQQQQQQP. The segment covering 156–169 has biased composition (acidic residues); sequence ETSDQDIDNDDDDA. Low complexity predominate over residues 177–190; that stretch reads TTTTTTTTTTTTTT. The segment covering 208–220 has biased composition (basic and acidic residues); the sequence is PKEKKKEKKENIL. A coiled-coil region spans residues 214–242; that stretch reads EKKENILTKKKQQSLQYQQQLQLLQRQNS. Low complexity predominate over residues 226–263; that stretch reads QSLQYQQQLQLLQRQNSPPSVSPSSSTSTSSSTSSPAS. The segment covering 264–294 has biased composition (polar residues); it reads NQIFNSFGPNSQNHNQYGINYNSQQHQPQQY. Low complexity predominate over residues 295–376; that stretch reads NNNNNNNNNN…NNNINNNSNN (82 aa). Over residues 392 to 407 the composition is skewed to polar residues; it reads YNQQNPPKHQYPNNFL. Low complexity predominate over residues 424-442; sequence NQSQNQNQNQNQNQNQNQK. Over residues 443-465 the composition is skewed to basic residues; it reads SKSKSKSKSKFKSKSKSKSKSKS.

This is an uncharacterized protein from Dictyostelium discoideum (Social amoeba).